We begin with the raw amino-acid sequence, 142 residues long: Organic hydroperoxide resistance protein-like 2 (142 aa).

Belongs to the OsmC/Ohr family.

In Staphylococcus epidermidis (strain ATCC 12228 / FDA PCI 1200), this protein is Organic hydroperoxide resistance protein-like 2.